Consider the following 240-residue polypeptide: RNA polymerase sigma factor SigI (240 aa).

A Polymerase core binding motif is present at residues 56 to 69; the sequence is DEYSIGLFAFNEAI. The segment at residues 194–213 is a DNA-binding region (H-T-H motif); sequence LKHIEPRVRVSRKTLERHRK.

This sequence belongs to the sigma-70 factor family. SigI subfamily. In terms of assembly, interacts with RsgI.

The protein resides in the cytoplasm. With respect to regulation, negatively regulated by the anti-sigma-I factor RsgI. Its function is as follows. Sigma factors are initiation factors that promote the attachment of RNA polymerase to specific initiation sites and are then released. This sigma factor contributes to both stress response and virulence gene expression. The chain is RNA polymerase sigma factor SigI from Bacillus anthracis.